A 223-amino-acid polypeptide reads, in one-letter code: Neurotrophic factor BDNF precursor form (223 aa).

The N-terminal stretch at 1-5 is a signal peptide; sequence SCMKA. A propeptide spanning residues 6-114 is cleaved from the precursor; that stretch reads APMKEVSIRG…AANMSMRVRR (109 aa). A glycan (N-linked (GlcNAc...) asparagine) is linked at Asn-107. Intrachain disulfides connect Cys-127–Cys-194 and Cys-172–Cys-223.

Belongs to the NGF-beta family.

The protein resides in the secreted. Its function is as follows. Promotes the survival of neuronal populations that are all located either in the central nervous system or directly connected to it. The protein is Neurotrophic factor BDNF precursor form (BDNF) of Aspidites melanocephalus (Black-headed python).